A 254-amino-acid chain; its full sequence is Sensory transduction protein LytR (254 aa).

Positions 2 to 116 (RAIIVDDEPL…RIAQAVHKVE (115 aa)) constitute a Response regulatory domain. A 4-aspartylphosphate modification is found at D53. Residues 120–143 (GQTTEHHSDSYTTASMDTQNNEKT) are disordered. The span at 129-138 (SYTTASMDTQ) shows a compositional bias: polar residues. One can recognise an HTH LytTR-type domain in the interval 149–253 (LPIEVNERIH…MKTFKQMMGL (105 aa)).

Phosphorylated by LytS.

It is found in the cytoplasm. Its function is as follows. Member of the two-component regulatory system LytR/LytS that probably regulates genes involved in cell wall metabolism. The protein is Sensory transduction protein LytR (lytR) of Staphylococcus saprophyticus subsp. saprophyticus (strain ATCC 15305 / DSM 20229 / NCIMB 8711 / NCTC 7292 / S-41).